The sequence spans 142 residues: Large ribosomal subunit protein uL13 (142 aa).

Belongs to the universal ribosomal protein uL13 family. As to quaternary structure, part of the 50S ribosomal subunit.

This protein is one of the early assembly proteins of the 50S ribosomal subunit, although it is not seen to bind rRNA by itself. It is important during the early stages of 50S assembly. This chain is Large ribosomal subunit protein uL13, found in Opitutus terrae (strain DSM 11246 / JCM 15787 / PB90-1).